A 235-amino-acid chain; its full sequence is Ribonuclease P protein component 3 (235 aa).

Belongs to the eukaryotic/archaeal RNase P protein component 3 family. In terms of assembly, consists of a catalytic RNA component and at least 4-5 protein subunits.

The protein resides in the cytoplasm. It carries out the reaction Endonucleolytic cleavage of RNA, removing 5'-extranucleotides from tRNA precursor.. In terms of biological role, part of ribonuclease P, a protein complex that generates mature tRNA molecules by cleaving their 5'-ends. The protein is Ribonuclease P protein component 3 of Haloarcula marismortui (strain ATCC 43049 / DSM 3752 / JCM 8966 / VKM B-1809) (Halobacterium marismortui).